We begin with the raw amino-acid sequence, 113 residues long: Hydrogenase maturation factor HypA (113 aa).

Position 2 (H2) interacts with Ni(2+). C73, C76, C89, and C92 together coordinate Zn(2+).

This sequence belongs to the HypA/HybF family.

Functionally, involved in the maturation of [NiFe] hydrogenases. Required for nickel insertion into the metal center of the hydrogenase. This Methylocella silvestris (strain DSM 15510 / CIP 108128 / LMG 27833 / NCIMB 13906 / BL2) protein is Hydrogenase maturation factor HypA.